Consider the following 141-residue polypeptide: Nucleoside diphosphate kinase (141 aa).

ATP is bound by residues Lys-11, Phe-59, Arg-87, Thr-93, Arg-104, and Asn-114. Catalysis depends on His-117, which acts as the Pros-phosphohistidine intermediate.

Belongs to the NDK family. Homotetramer. It depends on Mg(2+) as a cofactor.

The protein resides in the cytoplasm. It carries out the reaction a 2'-deoxyribonucleoside 5'-diphosphate + ATP = a 2'-deoxyribonucleoside 5'-triphosphate + ADP. It catalyses the reaction a ribonucleoside 5'-diphosphate + ATP = a ribonucleoside 5'-triphosphate + ADP. Its function is as follows. Major role in the synthesis of nucleoside triphosphates other than ATP. The ATP gamma phosphate is transferred to the NDP beta phosphate via a ping-pong mechanism, using a phosphorylated active-site intermediate. The polypeptide is Nucleoside diphosphate kinase (Vibrio campbellii (strain ATCC BAA-1116)).